The primary structure comprises 568 residues: MSKNLLTFEDVSVNFTQEEWQWLSDTQRDLYRKVTLENYKSLVSLGIPVYKPAVISLLEQGKDPWMVQKKGARDTCPDWQYVFKGTEFISKQDIYKESAKVLTMGRSHFSSSLDCPDLKEDHENEDWFKNRLGRQEVHSHQLFITHKEVPESEIRGCNPSCQAVHQNAILDVPQCSSTKERIDQSEPQKRSYRKKSVEMKHKKVQVEKRILKCSECEKVFNQTSSLTLHQRIHTGEKPYACVECGKAFSQSANLAQHKRIHTGEKPYECKECRKAFSQNAHLAQHQRVHTGEKPYQCKECKKAFSQIAHLTQHQRIHTGERPFECIECGKAFSNGSFLAQHQRIHTGEKPYVCHVCGKAFSHRGYLIVHQRIHTGERPYECKECRKSFSQYAHLSQHQRVHTGEKPYECKVCRKAFSQVAYLDQHQRVHTGEKPYECAECRKAFSNSSSLAQHQRSHTGEKPYICKECRKTFSQNAGLAQHQRIHTGEKPYECNICGKAFSYSGSLTLHQRIHTGERPYECKDCRKSFRQRAHLAHHEKVHTMESFLSLSSPSPSMSSQLPRTLGLIS.

The KRAB domain maps to 6-77; sequence LTFEDVSVNF…QKKGARDTCP (72 aa). 12 C2H2-type zinc fingers span residues 211–233, 239–261, 267–289, 295–317, 323–345, 351–373, 379–401, 407–429, 435–457, 463–485, 491–513, and 519–541; these read LKCS…QRIH, YACV…KRIH, YECK…QRVH, YQCK…QRIH, FECI…QRIH, YVCH…QRIH, YECA…QRSH, YICK…QRIH, YECN…QRIH, and YECK…EKVH.

Belongs to the krueppel C2H2-type zinc-finger protein family.

It is found in the nucleus. May be involved in transcriptional regulation. The sequence is that of Zinc finger protein 583 (Znf583) from Mus musculus (Mouse).